A 472-amino-acid polypeptide reads, in one-letter code: Chromosomal replication initiator protein DnaA (472 aa).

Residues 1 to 73 are domain I, interacts with DnaA modulators; it reads MSNMEQDRWS…LSCWQAELPE (73 aa). Residues 73-128 are domain II; it reads EVNRVDLTVRSPVRCAAPAKEAPAPVESRRDEQRPSAERSNGATPVSANHDALGGS. A disordered region spans residues 89–124; sequence APAKEAPAPVESRRDEQRPSAERSNGATPVSANHDA. Basic and acidic residues predominate over residues 99–109; the sequence is ESRRDEQRPSA. Residues 110-119 are compositionally biased toward polar residues; sequence ERSNGATPVS. The segment at 129–351 is domain III, AAA+ region; the sequence is PLDPRLTFAS…GAINRLLAHS (223 aa). Residues G176, G178, K179, and T180 each contribute to the ATP site. Residues 352–472 form a domain IV, binds dsDNA region; it reads KLNNQPVTLE…VESLKRQLQE (121 aa).

The protein belongs to the DnaA family. As to quaternary structure, oligomerizes as a right-handed, spiral filament on DNA at oriC.

It is found in the cytoplasm. Functionally, plays an essential role in the initiation and regulation of chromosomal replication. ATP-DnaA binds to the origin of replication (oriC) to initiate formation of the DNA replication initiation complex once per cell cycle. Binds the DnaA box (a 9 base pair repeat at the origin) and separates the double-stranded (ds)DNA. Forms a right-handed helical filament on oriC DNA; dsDNA binds to the exterior of the filament while single-stranded (ss)DNA is stabiized in the filament's interior. The ATP-DnaA-oriC complex binds and stabilizes one strand of the AT-rich DNA unwinding element (DUE), permitting loading of DNA polymerase. After initiation quickly degrades to an ADP-DnaA complex that is not apt for DNA replication. Binds acidic phospholipids. In Rhodopseudomonas palustris (strain TIE-1), this protein is Chromosomal replication initiator protein DnaA.